Consider the following 251-residue polypeptide: Gamma-gliadin (251 aa).

An N-terminal signal peptide occupies residues 1–19; sequence MKTLLILTILAMAITIGTA. A disordered region spans residues 26-143; that stretch reads SSQVQWPQQQ…QQSFPQQQPP (118 aa). A compositionally biased stretch (low complexity) spans 42-81; the sequence is QPFSQQPQQTFPQPQQTFPHQPQQQFPQPQQPQQQFLQPQ. Over residues 82 to 99 the composition is skewed to pro residues; sequence QPFPQQPQQPYPQQPQQP. Positions 100 to 139 are enriched in low complexity; that stretch reads FPQTQQPQQLFPQSQQPQQQFSQPQQQFPQPQQPQQSFPQ.

It belongs to the gliadin/glutenin family.

Gliadin is the major seed storage protein in wheat. This Triticum aestivum (Wheat) protein is Gamma-gliadin.